Here is a 256-residue protein sequence, read N- to C-terminus: Glucanase inhibitor protein 2 (256 aa).

An N-terminal signal peptide occupies residues 1 to 15; that stretch reads MKLISTIAAATTAFG. One can recognise a Peptidase S1 domain in the interval 27 to 254; it reads IFGGGIIPSG…ATEWINSVTK (228 aa). Cys54 and Cys70 are oxidised to a cystine. 4 N-linked (GlcNAc...) asparagine glycosylation sites follow: Asn87, Asn102, Asn107, and Asn157. 2 disulfides stabilise this stretch: Cys177–Cys189 and Cys199–Cys230.

The protein belongs to the peptidase S1 family. As to quaternary structure, forms an apoplastic complex with host endoglucanases in tomato leaves during P.infestans infection.

It is found in the secreted. In terms of biological role, secreted effector that suppresses host plant glucan elicitor-mediated defense responses. Targets host endoglucanases and inhibits the endoglucanase-mediated release of elicitor-active glucan oligosaccharides from P.infestans cell walls. The sequence is that of Glucanase inhibitor protein 2 from Phytophthora infestans (Potato late blight agent).